Reading from the N-terminus, the 204-residue chain is Glycerol-3-phosphate acyltransferase (204 aa).

A run of 5 helical transmembrane segments spans residues leucine 12 to alanine 32, tryptophan 85 to tryptophan 105, methionine 117 to leucine 137, isoleucine 142 to phenylalanine 162, and glutamine 163 to tryptophan 183.

It belongs to the PlsY family. Probably interacts with PlsX.

The protein resides in the cell inner membrane. The catalysed reaction is an acyl phosphate + sn-glycerol 3-phosphate = a 1-acyl-sn-glycero-3-phosphate + phosphate. It participates in lipid metabolism; phospholipid metabolism. Catalyzes the transfer of an acyl group from acyl-phosphate (acyl-PO(4)) to glycerol-3-phosphate (G3P) to form lysophosphatidic acid (LPA). This enzyme utilizes acyl-phosphate as fatty acyl donor, but not acyl-CoA or acyl-ACP. The sequence is that of Glycerol-3-phosphate acyltransferase from Prochlorococcus marinus (strain MIT 9313).